The primary structure comprises 223 residues: Phosphoribosylformylglycinamidine synthase subunit PurQ (223 aa).

Residues 3-223 (SAVVQLPGLN…FASALDVIAA (221 aa)) enclose the Glutamine amidotransferase type-1 domain. Cys86 (nucleophile) is an active-site residue. Catalysis depends on residues His196 and Glu198.

Part of the FGAM synthase complex composed of 1 PurL, 1 PurQ and 2 PurS subunits.

The protein localises to the cytoplasm. It carries out the reaction N(2)-formyl-N(1)-(5-phospho-beta-D-ribosyl)glycinamide + L-glutamine + ATP + H2O = 2-formamido-N(1)-(5-O-phospho-beta-D-ribosyl)acetamidine + L-glutamate + ADP + phosphate + H(+). It catalyses the reaction L-glutamine + H2O = L-glutamate + NH4(+). It participates in purine metabolism; IMP biosynthesis via de novo pathway; 5-amino-1-(5-phospho-D-ribosyl)imidazole from N(2)-formyl-N(1)-(5-phospho-D-ribosyl)glycinamide: step 1/2. In terms of biological role, part of the phosphoribosylformylglycinamidine synthase complex involved in the purines biosynthetic pathway. Catalyzes the ATP-dependent conversion of formylglycinamide ribonucleotide (FGAR) and glutamine to yield formylglycinamidine ribonucleotide (FGAM) and glutamate. The FGAM synthase complex is composed of three subunits. PurQ produces an ammonia molecule by converting glutamine to glutamate. PurL transfers the ammonia molecule to FGAR to form FGAM in an ATP-dependent manner. PurS interacts with PurQ and PurL and is thought to assist in the transfer of the ammonia molecule from PurQ to PurL. This is Phosphoribosylformylglycinamidine synthase subunit PurQ from Rhizobium meliloti (strain 1021) (Ensifer meliloti).